Here is a 542-residue protein sequence, read N- to C-terminus: Aminotriazole resistance protein (542 aa).

Topologically, residues M1–S108 are cytoplasmic. A helical transmembrane segment spans residues W109–G129. Residues D130 to K136 lie on the Extracellular side of the membrane. The chain crosses the membrane as a helical span at residues M137–Y157. Topologically, residues S158–G172 are cytoplasmic. A helical transmembrane segment spans residues L173–G193. The Extracellular portion of the chain corresponds to T194–N198. A helical membrane pass occupies residues I199–A219. Over G220–P231 the chain is Cytoplasmic. Residues W232–I252 traverse the membrane as a helical segment. The Extracellular portion of the chain corresponds to P253–H262. Residues F263–V283 traverse the membrane as a helical segment. At W284–A295 the chain is on the cytoplasmic side. Residues Y296–I316 form a helical membrane-spanning segment. The Extracellular portion of the chain corresponds to R317 to H333. Residues M334–Y354 form a helical membrane-spanning segment. The Cytoplasmic portion of the chain corresponds to Y355–G371. Residues G372–I392 form a helical membrane-spanning segment. Residues K393 to V399 lie on the Extracellular side of the membrane. Residues F400–V420 traverse the membrane as a helical segment. Residues H421 to L429 are Cytoplasmic-facing. The chain crosses the membrane as a helical span at residues G430–F450. At S451 to L505 the chain is on the extracellular side. A glycan (N-linked (GlcNAc...) asparagine) is linked at N471. Residues G506–I526 traverse the membrane as a helical segment. Residues K527–A542 are Cytoplasmic-facing.

The protein belongs to the major facilitator superfamily.

Its subcellular location is the membrane. Functionally, putative component of the machinery responsible for pumping aminotriazole (and possibly other toxic compounds) out of the cell. Probable ATP-dependent export permease. Appears to confer resistance only to aminotriazole. The sequence is that of Aminotriazole resistance protein (ATR1) from Saccharomyces cerevisiae (strain ATCC 204508 / S288c) (Baker's yeast).